The primary structure comprises 361 residues: Rho-GTPase-activating protein 5 (361 aa).

The region spanning 52 to 245 (IFLTRRDGEK…FLINHQGSFI (194 aa)) is the Rho-GAP domain. The span at 306–323 (SSATYSNSPSSNFSNMKS) shows a compositional bias: low complexity. Residues 306–345 (SSATYSNSPSSNFSNMKSSEVDPGSPPRIKSRSYSLSRSS) form a disordered region.

Its subcellular location is the membrane. Its function is as follows. GTPase-activating protein for Rho1. Has a role in the negative regulation of (1-3)beta-D-glucan synthase activity and cell integrity. The chain is Rho-GTPase-activating protein 5 (rga5) from Schizosaccharomyces pombe (strain 972 / ATCC 24843) (Fission yeast).